Reading from the N-terminus, the 264-residue chain is Acyl-[acyl-carrier-protein]--UDP-N-acetylglucosamine O-acyltransferase (264 aa).

The protein belongs to the transferase hexapeptide repeat family. LpxA subfamily. In terms of assembly, homotrimer.

It is found in the cytoplasm. The enzyme catalyses a (3R)-hydroxyacyl-[ACP] + UDP-N-acetyl-alpha-D-glucosamine = a UDP-3-O-[(3R)-3-hydroxyacyl]-N-acetyl-alpha-D-glucosamine + holo-[ACP]. It participates in glycolipid biosynthesis; lipid IV(A) biosynthesis; lipid IV(A) from (3R)-3-hydroxytetradecanoyl-[acyl-carrier-protein] and UDP-N-acetyl-alpha-D-glucosamine: step 1/6. Functionally, involved in the biosynthesis of lipid A, a phosphorylated glycolipid that anchors the lipopolysaccharide to the outer membrane of the cell. This Glaesserella parasuis serovar 5 (strain SH0165) (Haemophilus parasuis) protein is Acyl-[acyl-carrier-protein]--UDP-N-acetylglucosamine O-acyltransferase.